An 80-amino-acid polypeptide reads, in one-letter code: Cell division protein ZapB (80 aa).

Positions 3–80 form a coiled coil; sequence FEVFEKLEAK…ALLGKMEDVQ (78 aa).

This sequence belongs to the ZapB family. Homodimer. The ends of the coiled-coil dimer bind to each other, forming polymers. Interacts with FtsZ.

The protein localises to the cytoplasm. Functionally, non-essential, abundant cell division factor that is required for proper Z-ring formation. It is recruited early to the divisome by direct interaction with FtsZ, stimulating Z-ring assembly and thereby promoting cell division earlier in the cell cycle. Its recruitment to the Z-ring requires functional FtsA or ZipA. The protein is Cell division protein ZapB of Photorhabdus laumondii subsp. laumondii (strain DSM 15139 / CIP 105565 / TT01) (Photorhabdus luminescens subsp. laumondii).